Here is a 105-residue protein sequence, read N- to C-terminus: Replication initiation control protein YabA (105 aa).

4 residues coordinate Zn(2+): H79, C81, C95, and C98.

This sequence belongs to the YabA family. Homotetramer. Interacts with both DnaA and DnaN, acting as a bridge between these two proteins. The cofactor is Zn(2+).

The protein resides in the cytoplasm. The protein localises to the nucleoid. Functionally, involved in control of chromosome replication initiation. Inhibits the cooperative binding of DnaA to the oriC region, thus negatively regulating initiation of chromosome replication. Inhibits the ability of DnaA-ATP to form a helix on DNA; does not disassemble preformed DnaA-DNA helices. Decreases the residence time of DnaA on the chromosome at its binding sites (oriC, replication forks and promoter-binding sites). Tethers DnaA to the replication machinery via the DNA polymerase beta sliding clamp subunit (dnaN). Associates with oriC and other DnaA targets on the chromosome in a DnaA-dependent manner. The polypeptide is Replication initiation control protein YabA (Streptococcus pneumoniae serotype 2 (strain D39 / NCTC 7466)).